The chain runs to 164 residues: FMN reductase (NADH) RutF (164 aa).

This sequence belongs to the non-flavoprotein flavin reductase family. RutF subfamily.

It catalyses the reaction FMNH2 + NAD(+) = FMN + NADH + 2 H(+). Functionally, catalyzes the reduction of FMN to FMNH2 which is used to reduce pyrimidine by RutA via the Rut pathway. This chain is FMN reductase (NADH) RutF, found in Escherichia coli O81 (strain ED1a).